The chain runs to 297 residues: Homoserine kinase (297 aa).

82–92 (PVSRGLGSSAA) is a binding site for ATP.

The protein belongs to the GHMP kinase family. Homoserine kinase subfamily.

It localises to the cytoplasm. It catalyses the reaction L-homoserine + ATP = O-phospho-L-homoserine + ADP + H(+). The protein operates within amino-acid biosynthesis; L-threonine biosynthesis; L-threonine from L-aspartate: step 4/5. Functionally, catalyzes the ATP-dependent phosphorylation of L-homoserine to L-homoserine phosphate. In Clostridium botulinum (strain Okra / Type B1), this protein is Homoserine kinase.